A 233-amino-acid chain; its full sequence is UPF0502 protein YpsIP31758_2048 (233 aa).

It belongs to the UPF0502 family.

This is UPF0502 protein YpsIP31758_2048 from Yersinia pseudotuberculosis serotype O:1b (strain IP 31758).